Here is a 451-residue protein sequence, read N- to C-terminus: Phenylalanine--tRNA ligase, mitochondrial (451 aa).

Substrate contacts are provided by residues 157-160, Arg179, 186-188, and 193-195; these read SAHQ, QHY, and QLE. Residue Lys202 is modified to N6-acetyllysine. Positions 287 and 312 each coordinate substrate. The FDX-ACB domain occupies 358–450; sequence SKYPAVFNDI…AVQLLGVEGR (93 aa).

The protein belongs to the class-II aminoacyl-tRNA synthetase family. As to quaternary structure, monomer.

The protein localises to the mitochondrion matrix. It localises to the mitochondrion. The catalysed reaction is tRNA(Phe) + L-phenylalanine + ATP = L-phenylalanyl-tRNA(Phe) + AMP + diphosphate + H(+). Is responsible for the charging of tRNA(Phe) with phenylalanine in mitochondrial translation. To a lesser extent, also catalyzes direct attachment of m-Tyr (an oxidized version of Phe) to tRNA(Phe), thereby opening the way for delivery of the misacylated tRNA to the ribosome and incorporation of ROS-damaged amino acid into proteins. This is Phenylalanine--tRNA ligase, mitochondrial (Fars2) from Mus musculus (Mouse).